A 1156-amino-acid polypeptide reads, in one-letter code: Nitric oxide synthase, inducible (1156 aa).

The DINNN-motif; mediates interaction with SPSB1, SPSB2 and SPSB4 signature appears at 23-27 (DINNN). The tract at residues 27-84 (NVGKFYQPPSSPVTQDDPKRHSPGKHGNESPQPLTGTVKTSPESLSKLDAPPSACPRH) is disordered. Residues 55-70 (ESPQPLTGTVKTSPES) show a composition bias toward polar residues. Zn(2+) contacts are provided by C110 and C115. S118 contacts (6R)-L-erythro-5,6,7,8-tetrahydrobiopterin. C200 serves as a coordination point for heme b. Q263, W372, Y373, and E377 together coordinate L-arginine. Positions 381, 462, 463, and 476 each coordinate (6R)-L-erythro-5,6,7,8-tetrahydrobiopterin. Y491 lines the heme b pocket. The calmodulin-binding stretch occupies residues 515–535 (FKVLVKAVFFASVLMHKAMAS). Residues 539-677 (ATILFATETG…AFRSWAVQTF (139 aa)) form the Flavodoxin-like domain. FMN-binding residues include T545, E546, T547, R549, and S550. Y575 is subject to Phosphotyrosine. 6 residues coordinate FMN: S591, T592, S628, C635, E661, and Q665. The FAD-binding FR-type domain maps to 730–970 (KHVFTMRLKS…VRSASGFQLP (241 aa)). R750 is a binding site for NADP(+). Positions 772, 906, 908, 909, 924, and 926 each coordinate FAD. T929 is an NADP(+) binding site. FAD-binding residues include Y930, V943, C944, and S945. 8 residues coordinate NADP(+): T984, R1017, S1046, R1047, K1053, Y1055, Q1057, and D1090.

The protein belongs to the NOS family. In terms of assembly, homodimer. Interacts with NHERF1. Interacts with GAPDH; induced by oxidatively-modified low-densitity lipoprotein (LDL(ox)). Interacts with S100A8 and S100A9 to form the iNOS-S100A8/9 transnitrosylase complex. Interacts with SPSB1, SPSB2 and SPSB4. Interacts with ELOC and CUL5 in the presence of SPSB1 or SPSB2 or SPSB4. Forms a complex with ASL, ASS1 and HSP90AA1; the complex regulates cell-autonomous L-arginine synthesis and citrulline recycling while channeling extracellular L-arginine to nitric oxide synthesis pathway. The cofactor is heme b. Requires FAD as cofactor. It depends on FMN as a cofactor. (6R)-L-erythro-5,6,7,8-tetrahydrobiopterin is required as a cofactor. Post-translationally, polyubiquitinated; mediated by SPSB1, SPSB2 and SPSB4, leading to proteasomal degradation.

It is found in the cytoplasm. The protein resides in the cytosol. The enzyme catalyses 2 L-arginine + 3 NADPH + 4 O2 + H(+) = 2 L-citrulline + 2 nitric oxide + 3 NADP(+) + 4 H2O. Regulated by calcium/calmodulin. Functionally, produces nitric oxide (NO) which is a messenger molecule with diverse functions throughout the body. In macrophages, NO mediates tumoricidal and bactericidal actions. Also has nitrosylase activity and mediates cysteine S-nitrosylation of cytoplasmic target proteins such PTGS2/COX2. As component of the iNOS-S100A8/9 transnitrosylase complex involved in the selective inflammatory stimulus-dependent S-nitrosylation of GAPDH implicated in regulation of the GAIT complex activity and probably multiple targets including ANXA5, EZR, MSN and VIM. Involved in inflammation, enhances the synthesis of pro-inflammatory mediators such as IL6 and IL8. The chain is Nitric oxide synthase, inducible (NOS2) from Bos taurus (Bovine).